A 283-amino-acid chain; its full sequence is Formamidopyrimidine-DNA glycosylase (283 aa).

The active-site Schiff-base intermediate with DNA is the Pro2. Catalysis depends on Glu3, which acts as the Proton donor. The Proton donor; for beta-elimination activity role is filled by Lys58. Residues His100, Arg119, and Arg162 each coordinate DNA. The segment at 247–283 (RVYGREGQPCVTPGCRGLVGRIVQSGRSSFHCPECQR) adopts an FPG-type zinc-finger fold. Arg273 (proton donor; for delta-elimination activity) is an active-site residue.

The protein belongs to the FPG family. Monomer. The cofactor is Zn(2+).

The enzyme catalyses Hydrolysis of DNA containing ring-opened 7-methylguanine residues, releasing 2,6-diamino-4-hydroxy-5-(N-methyl)formamidopyrimidine.. The catalysed reaction is 2'-deoxyribonucleotide-(2'-deoxyribose 5'-phosphate)-2'-deoxyribonucleotide-DNA = a 3'-end 2'-deoxyribonucleotide-(2,3-dehydro-2,3-deoxyribose 5'-phosphate)-DNA + a 5'-end 5'-phospho-2'-deoxyribonucleoside-DNA + H(+). Involved in base excision repair of DNA damaged by oxidation or by mutagenic agents. Acts as a DNA glycosylase that recognizes and removes damaged bases. Has a preference for oxidized purines, such as 7,8-dihydro-8-oxoguanine (8-oxoG). Has AP (apurinic/apyrimidinic) lyase activity and introduces nicks in the DNA strand. Cleaves the DNA backbone by beta-delta elimination to generate a single-strand break at the site of the removed base with both 3'- and 5'-phosphates. This is Formamidopyrimidine-DNA glycosylase from Cereibacter sphaeroides (strain ATCC 17025 / ATH 2.4.3) (Rhodobacter sphaeroides).